The sequence spans 197 residues: Dephospho-CoA kinase (197 aa).

Positions 3-197 (IIGLTGGIAS…IEEIWAKRFP (195 aa)) constitute a DPCK domain. 11–16 (ASGKST) is an ATP binding site.

The protein belongs to the CoaE family.

Its subcellular location is the cytoplasm. The enzyme catalyses 3'-dephospho-CoA + ATP = ADP + CoA + H(+). It participates in cofactor biosynthesis; coenzyme A biosynthesis; CoA from (R)-pantothenate: step 5/5. Its function is as follows. Catalyzes the phosphorylation of the 3'-hydroxyl group of dephosphocoenzyme A to form coenzyme A. The chain is Dephospho-CoA kinase from Geobacter sulfurreducens (strain ATCC 51573 / DSM 12127 / PCA).